The chain runs to 349 residues: Isopentenyl-diphosphate delta-isomerase (349 aa).

Residue arginine 7 to lysine 8 coordinates substrate. FMN-binding positions include serine 65, serine 66–threonine 68, serine 96, and asparagine 124. Residue serine 96–arginine 98 participates in substrate binding. Glutamine 159 serves as a coordination point for substrate. Glutamate 160 is a Mg(2+) binding site. Residues lysine 191, threonine 221, glycine 271 to arginine 273, and alanine 292 to alanine 293 each bind FMN.

This sequence belongs to the IPP isomerase type 2 family. In terms of assembly, homooctamer. Dimer of tetramers. It depends on FMN as a cofactor. The cofactor is NADPH. Mg(2+) serves as cofactor.

It localises to the cytoplasm. The enzyme catalyses isopentenyl diphosphate = dimethylallyl diphosphate. Involved in the biosynthesis of isoprenoids. Catalyzes the 1,3-allylic rearrangement of the homoallylic substrate isopentenyl (IPP) to its allylic isomer, dimethylallyl diphosphate (DMAPP). The protein is Isopentenyl-diphosphate delta-isomerase of Synechocystis sp. (strain ATCC 27184 / PCC 6803 / Kazusa).